Consider the following 500-residue polypeptide: NAD(P)H-quinone oxidoreductase chain 4, chloroplastic (500 aa).

The next 14 helical transmembrane spans lie at 4–24 (FPWL…MLFL), 35–55 (YTIC…CYNF), 87–107 (IGTI…AFPV), 113–130 (LFHF…GSFS), 134–154 (LLLF…LLAM), 167–187 (FILY…GLSL), 211–231 (ILFY…IPLH), 242–262 (HYST…YGLV), 272–292 (AHSM…IYAA), 305–325 (IAYS…SITD), 330–350 (GAIL…FLAG), 386–406 (LALP…GIIT), 416–436 (ILII…LLSM), and 462–482 (LFLS…PDFV).

Belongs to the complex I subunit 4 family.

The protein resides in the plastid. Its subcellular location is the chloroplast thylakoid membrane. The catalysed reaction is a plastoquinone + NADH + (n+1) H(+)(in) = a plastoquinol + NAD(+) + n H(+)(out). It carries out the reaction a plastoquinone + NADPH + (n+1) H(+)(in) = a plastoquinol + NADP(+) + n H(+)(out). The chain is NAD(P)H-quinone oxidoreductase chain 4, chloroplastic from Lepidium virginicum (Virginia pepperweed).